Here is a 444-residue protein sequence, read N- to C-terminus: 3-isopropylmalate dehydratase large subunit (444 aa).

[4Fe-4S] cluster-binding residues include Cys348, Cys408, and Cys411.

The protein belongs to the aconitase/IPM isomerase family. LeuC type 1 subfamily. In terms of assembly, heterodimer of LeuC and LeuD. It depends on [4Fe-4S] cluster as a cofactor.

The catalysed reaction is (2R,3S)-3-isopropylmalate = (2S)-2-isopropylmalate. Its pathway is amino-acid biosynthesis; L-leucine biosynthesis; L-leucine from 3-methyl-2-oxobutanoate: step 2/4. Functionally, catalyzes the isomerization between 2-isopropylmalate and 3-isopropylmalate, via the formation of 2-isopropylmaleate. This is 3-isopropylmalate dehydratase large subunit from Buchnera aphidicola subsp. Uroleucon ambrosiae.